We begin with the raw amino-acid sequence, 185 residues long: Photosystem I assembly protein Ycf4 (185 aa).

A run of 3 helical transmembrane segments spans residues 22–42 (FFFA…GFSS), 57–77 (ILFV…LFFS), and 101–121 (FYVF…LRVP).

It belongs to the Ycf4 family.

It is found in the plastid. The protein resides in the chloroplast thylakoid membrane. Seems to be required for the assembly of the photosystem I complex. The protein is Photosystem I assembly protein Ycf4 of Gnetum parvifolium (Small-leaved jointfir).